A 104-amino-acid chain; its full sequence is Phosphoribosyl-ATP pyrophosphatase (104 aa).

Belongs to the PRA-PH family.

The protein resides in the cytoplasm. It catalyses the reaction 1-(5-phospho-beta-D-ribosyl)-ATP + H2O = 1-(5-phospho-beta-D-ribosyl)-5'-AMP + diphosphate + H(+). Its pathway is amino-acid biosynthesis; L-histidine biosynthesis; L-histidine from 5-phospho-alpha-D-ribose 1-diphosphate: step 2/9. This is Phosphoribosyl-ATP pyrophosphatase from Streptococcus gordonii (strain Challis / ATCC 35105 / BCRC 15272 / CH1 / DL1 / V288).